Consider the following 243-residue polypeptide: Hydroxyacylglutathione hydrolase (243 aa).

Positions 52, 54, 56, 57, 108, 125, and 163 each coordinate Zn(2+).

Belongs to the metallo-beta-lactamase superfamily. Glyoxalase II family. As to quaternary structure, monomer. Zn(2+) serves as cofactor.

It carries out the reaction an S-(2-hydroxyacyl)glutathione + H2O = a 2-hydroxy carboxylate + glutathione + H(+). Its pathway is secondary metabolite metabolism; methylglyoxal degradation; (R)-lactate from methylglyoxal: step 2/2. In terms of biological role, thiolesterase that catalyzes the hydrolysis of S-D-lactoyl-glutathione to form glutathione and D-lactic acid. The protein is Hydroxyacylglutathione hydrolase of Haemophilus influenzae (strain PittGG).